The following is a 450-amino-acid chain: TNF receptor-associated factor family protein DDB_G0273433/DDB_G0273509 (450 aa).

The RING-type; degenerate zinc finger occupies 26–73 (CQICFNSVIDFKKETLSFDVLQCRNGHISCHECWNRQLSIKQECPSCK). TRAF-type zinc fingers lie at residues 129–185 (HHLK…KKLN) and 186–243 (KHIE…SQLS). A coiled-coil region spans residues 257–297 (QNVMDLHKLQLDECNQDYRKLEKQNRDLEKRLFYLESTVNS). The 121-residue stretch at 319–439 (VYKGKWVINN…NNSLTISISI (121 aa)) folds into the MATH domain.

Belongs to the TNF receptor-associated factor family. A subfamily.

It localises to the cytoplasm. Functionally, probable adapter protein and signal transducer that links members of the tumor necrosis factor receptor family to different signaling pathways by association with the receptor cytoplasmic domain and kinases. This chain is TNF receptor-associated factor family protein DDB_G0273433/DDB_G0273509, found in Dictyostelium discoideum (Social amoeba).